Reading from the N-terminus, the 803-residue chain is Urocanate reductase (803 aa).

Ser258 carries the post-translational modification FMN phosphoryl serine. 7 residues coordinate FAD: Ala311, Glu330, Asn338, Thr339, Gly343, Gly344, and Asp573. Catalysis depends on Arg632, which acts as the Proton donor. 4 residues coordinate FAD: His739, Glu768, Ala783, and Leu784.

Belongs to the FAD-dependent oxidoreductase 2 family. FRD/SDH subfamily. The cofactor is FAD. FMN is required as a cofactor.

The enzyme catalyses dihydrourocanate + A = urocanate + AH2. In terms of biological role, catalyzes the two-electron reduction of urocanate to dihydrourocanate (also named imidazole propionate or deamino-histidine). Dihydrourocanate is present at higher concentrations in subjects with type 2 diabetes, and directly impairs glucose tolerance and insulin signaling at the level of insulin receptor substrate (IRS) through activation of p38 gamma (MAPK12)-p62-mTORC1. Therefore, the UrdA enzyme from the gut bacteria S.mutans strain UA159 may contribute to the pathogenesis of type 2 diabetes by producing the microbial metabolite dihydrourocanate. In Streptococcus mutans serotype c (strain ATCC 700610 / UA159), this protein is Urocanate reductase.